The following is a 443-amino-acid chain: Ribulose bisphosphate carboxylase large chain (443 aa).

Substrate-binding residues include Asn89 and Thr139. Catalysis depends on Lys141, which acts as the Proton acceptor. Lys143 lines the substrate pocket. Positions 167, 169, and 170 each coordinate Mg(2+). Lys167 is subject to N6-carboxylysine. The active-site Proton acceptor is His260. Positions 261, 293, and 345 each coordinate substrate.

Belongs to the RuBisCO large chain family. Type I subfamily. In terms of assembly, heterohexadecamer of 8 large chains and 8 small chains; disulfide-linked. The disulfide link is formed within the large subunit homodimers. Mg(2+) serves as cofactor. In terms of processing, the disulfide bond which can form in the large chain dimeric partners within the hexadecamer appears to be associated with oxidative stress and protein turnover.

Its subcellular location is the plastid. It localises to the chloroplast. The catalysed reaction is 2 (2R)-3-phosphoglycerate + 2 H(+) = D-ribulose 1,5-bisphosphate + CO2 + H2O. It carries out the reaction D-ribulose 1,5-bisphosphate + O2 = 2-phosphoglycolate + (2R)-3-phosphoglycerate + 2 H(+). RuBisCO catalyzes two reactions: the carboxylation of D-ribulose 1,5-bisphosphate, the primary event in carbon dioxide fixation, as well as the oxidative fragmentation of the pentose substrate in the photorespiration process. Both reactions occur simultaneously and in competition at the same active site. In Callitriche heterophylla (Large water-starwort), this protein is Ribulose bisphosphate carboxylase large chain.